A 338-amino-acid polypeptide reads, in one-letter code: Nicotinate-nucleotide--dimethylbenzimidazole phosphoribosyltransferase (338 aa).

Catalysis depends on Glu305, which acts as the Proton acceptor.

Belongs to the CobT family. Homodimer.

It catalyses the reaction 5,6-dimethylbenzimidazole + nicotinate beta-D-ribonucleotide = alpha-ribazole 5'-phosphate + nicotinate + H(+). Its pathway is nucleoside biosynthesis; alpha-ribazole biosynthesis; alpha-ribazole from 5,6-dimethylbenzimidazole: step 1/2. Functionally, catalyzes the synthesis of alpha-ribazole-5'-phosphate from nicotinate mononucleotide (NAMN) and 5,6-dimethylbenzimidazole (DMB). The polypeptide is Nicotinate-nucleotide--dimethylbenzimidazole phosphoribosyltransferase (cobU) (Sinorhizobium sp).